A 264-amino-acid polypeptide reads, in one-letter code: MLIHPQFDPVALELGPLAIHWYGLTYLVAFGLFLWLASLRVQHSPFRETGWTRRDVEDLLFYGVLGVIIGGRLGYVLFYKPGYYAAHPLEVFEVWKGGMAFHGGLLGVIGAMALFARTRGRRWLEVTDLIAPCVPTGLASGRIGNFINGELWGRAADPSLPWAMVYPQSGSEIPRHPSPLYQFALEGLLLFVVLWLYARKPRATGQVSGAFLVGYGVLRFIAEYFREPDGFLGLLALGMSMGQWLCVPMVAAGVALWVWAGRRA.

3 consecutive transmembrane segments (helical) span residues 17 to 37 (LAIHWYGLTYLVAFGLFLWLA), 59 to 79 (LLFYGVLGVIIGGRLGYVLFY), and 95 to 115 (WKGGMAFHGGLLGVIGAMALF). Residue arginine 142 participates in a 1,2-diacyl-sn-glycero-3-phospho-(1'-sn-glycerol) binding. 2 consecutive transmembrane segments (helical) span residues 205–225 (GQVSGAFLVGYGVLRFIAEYF) and 241–261 (MGQWLCVPMVAAGVALWVWAG).

The protein belongs to the Lgt family.

Its subcellular location is the cell inner membrane. It catalyses the reaction L-cysteinyl-[prolipoprotein] + a 1,2-diacyl-sn-glycero-3-phospho-(1'-sn-glycerol) = an S-1,2-diacyl-sn-glyceryl-L-cysteinyl-[prolipoprotein] + sn-glycerol 1-phosphate + H(+). The protein operates within protein modification; lipoprotein biosynthesis (diacylglyceryl transfer). Its function is as follows. Catalyzes the transfer of the diacylglyceryl group from phosphatidylglycerol to the sulfhydryl group of the N-terminal cysteine of a prolipoprotein, the first step in the formation of mature lipoproteins. The chain is Phosphatidylglycerol--prolipoprotein diacylglyceryl transferase from Methylibium petroleiphilum (strain ATCC BAA-1232 / LMG 22953 / PM1).